The sequence spans 112 residues: Protein FAM32A (112 aa).

The disordered stretch occupies residues 23-56; the sequence is TKRKKKKKDKDKAKMLEAMGTSKKSEEEKRRCLD. The segment covering 45 to 56 has biased composition (basic and acidic residues); the sequence is KKSEEEKRRCLD.

This sequence belongs to the FAM32 family. As to expression, widely expressed, with highest level in pancreas and lowest in muscle.

It is found in the nucleus. Its function is as follows. May induce G2 arrest and apoptosis. May also increase cell sensitivity to apoptotic stimuli. In cell lines, may play a role in the inhibition of anchor-independent cell growth. This chain is Protein FAM32A (Fam32a), found in Mus musculus (Mouse).